A 502-amino-acid chain; its full sequence is Probable cytosol aminopeptidase (502 aa).

Residues Lys269 and Asp274 each contribute to the Mn(2+) site. Lys281 is an active-site residue. Mn(2+)-binding residues include Asp292, Asp351, and Glu353. Arg355 is an active-site residue.

Belongs to the peptidase M17 family. It depends on Mn(2+) as a cofactor.

The protein resides in the cytoplasm. It carries out the reaction Release of an N-terminal amino acid, Xaa-|-Yaa-, in which Xaa is preferably Leu, but may be other amino acids including Pro although not Arg or Lys, and Yaa may be Pro. Amino acid amides and methyl esters are also readily hydrolyzed, but rates on arylamides are exceedingly low.. The catalysed reaction is Release of an N-terminal amino acid, preferentially leucine, but not glutamic or aspartic acids.. In terms of biological role, presumably involved in the processing and regular turnover of intracellular proteins. Catalyzes the removal of unsubstituted N-terminal amino acids from various peptides. The polypeptide is Probable cytosol aminopeptidase (Shewanella loihica (strain ATCC BAA-1088 / PV-4)).